The following is a 2273-amino-acid chain: Acetyl-CoA carboxylase, mitochondrial (2273 aa).

The transit peptide at 1 to 104 (KGKTITHGQS…RGNIHKHTRL (104 aa)) directs the protein to the mitochondrion. One can recognise a Biotin carboxylation domain in the interval 134–635 (VISKILIANN…STGWLDDLIL (502 aa)). Positions 292–484 (KTNFVSVPDD…LPATQLQIAM (193 aa)) constitute an ATP-grasp domain. 332-337 (GGGGKG) contacts ATP. Arginine 459 is an active-site residue. In terms of domain architecture, Biotinyl-binding spans 763–837 (LEAELNPTQV…EAGDVIAKLT (75 aa)). Position 804 is an N6-biotinyllysine (lysine 804). In terms of domain architecture, CoA carboxyltransferase N-terminal spans 1532-1867 (PYSVKDWLQP…KRDMSPPLLE (336 aa)). The interval 1532–2187 (PYSVKDWLQP…EGQVIKRLQK (656 aa)) is carboxyltransferase. CoA contacts are provided by arginine 1776, lysine 2080, and arginine 2082. Residues 1871–2187 (RWDRDVDFKP…EGQVIKRLQK (317 aa)) enclose the CoA carboxyltransferase C-terminal domain.

Requires biotin as cofactor.

The protein resides in the mitochondrion. The enzyme catalyses hydrogencarbonate + acetyl-CoA + ATP = malonyl-CoA + ADP + phosphate + H(+). It carries out the reaction N(6)-biotinyl-L-lysyl-[protein] + hydrogencarbonate + ATP = N(6)-carboxybiotinyl-L-lysyl-[protein] + ADP + phosphate + H(+). It functions in the pathway lipid metabolism; malonyl-CoA biosynthesis; malonyl-CoA from acetyl-CoA: step 1/1. In terms of biological role, catalyzes the rate-limiting reaction in the mitochondrial fatty acid synthesis (FAS) type II pathway. Responsible for the production of the mitochondrial malonyl-CoA, used for the biosynthesis of the cofactor lipoic acid. This protein carries three functions: biotin carboxyl carrier protein, biotin carboxylase, and carboxyltransferase. In Saccharomyces cerevisiae (strain ATCC 204508 / S288c) (Baker's yeast), this protein is Acetyl-CoA carboxylase, mitochondrial (HFA1).